The chain runs to 944 residues: Isoleucine--tRNA ligase (944 aa).

Positions P58–H68 match the 'HIGH' region motif. L-isoleucyl-5'-AMP is bound at residue E563. Positions K604 to S608 match the 'KMSKS' region motif. K607 contacts ATP. C907, C910, C927, and C930 together coordinate Zn(2+).

This sequence belongs to the class-I aminoacyl-tRNA synthetase family. IleS type 1 subfamily. In terms of assembly, monomer. Zn(2+) is required as a cofactor.

The protein localises to the cytoplasm. It carries out the reaction tRNA(Ile) + L-isoleucine + ATP = L-isoleucyl-tRNA(Ile) + AMP + diphosphate. Its function is as follows. Catalyzes the attachment of isoleucine to tRNA(Ile). As IleRS can inadvertently accommodate and process structurally similar amino acids such as valine, to avoid such errors it has two additional distinct tRNA(Ile)-dependent editing activities. One activity is designated as 'pretransfer' editing and involves the hydrolysis of activated Val-AMP. The other activity is designated 'posttransfer' editing and involves deacylation of mischarged Val-tRNA(Ile). In Salmonella typhi, this protein is Isoleucine--tRNA ligase.